We begin with the raw amino-acid sequence, 400 residues long: MFPERVLSGMRPTGALHLGHYHGVLKNWVRLQAEYPCFFFVADWHALTTHYESPEVIEESVWEMLIDWLAAGVDPTQATLFIQSRVPEHAELFLLLSMGTPLGWLERVPTYKDQIEKLKEKDLSTYGFLGYPLLQAADILIYRAGFVPVGEDQVPHVEMTREVARRFNYLYGREPGFEQKALDAAKKLGGKRAKLYLELRTAHQERGEDDALEQARALLAESQSLSMGDRERLFGYLEGARKIILPEPQVLLTEASRMPGLDGQKMSKSYGNTIRMREDKASVEKKVRTMPTDPARVRRTDPGDPGKCPVWQLHQVYSDADTREWVQKGCRSAGIGCLECKQPVIDGILREQQPMLERAQKYMDDPSLLRAIIADGCDTAHKVTQETMREVREAMGLTYS.

Positions 12-20 match the 'HIGH' region motif; it reads PTGALHLGH. The segment at 173–241 is insert; it reads REPGFEQKAL…RLFGYLEGAR (69 aa). Positions 265–269 match the 'KMSKS' region motif; the sequence is KMSKS. Residue K268 participates in ATP binding. The interval 280–305 is disordered; the sequence is KASVEKKVRTMPTDPARVRRTDPGDP. The span at 295–304 shows a compositional bias: basic and acidic residues; that stretch reads ARVRRTDPGD.

It belongs to the class-I aminoacyl-tRNA synthetase family. In terms of assembly, homodimer.

Its subcellular location is the cytoplasm. The catalysed reaction is tRNA(Trp) + L-tryptophan + ATP = L-tryptophyl-tRNA(Trp) + AMP + diphosphate + H(+). The polypeptide is Tryptophan--tRNA ligase (trpS) (Ralstonia nicotianae (strain ATCC BAA-1114 / GMI1000) (Ralstonia solanacearum)).